The chain runs to 116 residues: Flagellar hook-basal body complex protein FliE (116 aa).

It belongs to the FliE family.

The protein resides in the bacterial flagellum basal body. This Rhizobium rhizogenes (strain K84 / ATCC BAA-868) (Agrobacterium radiobacter) protein is Flagellar hook-basal body complex protein FliE.